We begin with the raw amino-acid sequence, 316 residues long: Uracil-DNA glycosylase (316 aa).

Over residues alanine 36 to serine 79 the composition is skewed to low complexity. The disordered stretch occupies residues alanine 36–aspartate 91. The active-site Proton acceptor is aspartate 159.

This sequence belongs to the uracil-DNA glycosylase (UDG) superfamily. UNG family.

The protein resides in the host nucleus. The catalysed reaction is Hydrolyzes single-stranded DNA or mismatched double-stranded DNA and polynucleotides, releasing free uracil.. Functionally, excises uracil residues from the DNA which can arise as a result of misincorporation of dUMP residues by DNA polymerase or deamination of cytosines. Therefore may reduce deleterious uracil incorporation into the viral genome, particularly in terminally differentiated cells which lack DNA repair enzymes. The chain is Uracil-DNA glycosylase (UL2) from Sus scrofa (Pig).